Reading from the N-terminus, the 246-residue chain is 3-deoxy-manno-octulosonate cytidylyltransferase (246 aa).

Belongs to the KdsB family. As to quaternary structure, homodimer.

The protein resides in the cytoplasm. The catalysed reaction is 3-deoxy-alpha-D-manno-oct-2-ulosonate + CTP = CMP-3-deoxy-beta-D-manno-octulosonate + diphosphate. It participates in nucleotide-sugar biosynthesis; CMP-3-deoxy-D-manno-octulosonate biosynthesis; CMP-3-deoxy-D-manno-octulosonate from 3-deoxy-D-manno-octulosonate and CTP: step 1/1. Its pathway is bacterial outer membrane biogenesis; lipopolysaccharide biosynthesis. In terms of biological role, activates KDO (a required 8-carbon sugar) for incorporation into bacterial lipopolysaccharide in Gram-negative bacteria. The sequence is that of 3-deoxy-manno-octulosonate cytidylyltransferase (kpsU) from Escherichia coli.